A 392-amino-acid chain; its full sequence is Putative RNA-binding protein Luc7-like 2 (392 aa).

Phosphoserine is present on Ser-18. The stretch at 102–177 (EVSKKRLAET…EAEEVYRNSM (76 aa)) forms a coiled coil. The span at 235–257 (KQEKRNQERLKRREEREREEREK) shows a compositional bias: basic and acidic residues. Residues 235 to 392 (KQEKRNQERL…SSEEREAGEI (158 aa)) form a disordered region. A compositionally biased stretch (basic residues) spans 258–321 (LRRSRSHSKN…RSRSHQRSRH (64 aa)). 5-hydroxylysine; by JMJD6 is present on residues Lys-266 and Lys-269. Composition is skewed to basic and acidic residues over residues 337 to 364 (KERF…DRDR) and 377 to 392 (RSED…AGEI).

It belongs to the Luc7 family. In terms of assembly, interacts with SCNM1. As to expression, all isoforms are expressed in brain, kidney, heart, thymus, stomach, skeletal muscle, testis and spinal cord.

It is found in the nucleus speckle. The protein localises to the nucleus. It localises to the nucleoplasm. Functionally, may bind to RNA via its Arg/Ser-rich domain. In Mus musculus (Mouse), this protein is Putative RNA-binding protein Luc7-like 2 (Luc7l2).